A 648-amino-acid polypeptide reads, in one-letter code: ATP-dependent zinc metalloprotease FtsH 4 (648 aa).

Residues 1–6 (MKQSHK) lie on the Cytoplasmic side of the membrane. A helical membrane pass occupies residues 7–27 (TLLLWVLLIMMFLAIWQFLSP). The Periplasmic segment spans residues 28 to 111 (DSRPATQVAF…VFFEKEDTSP (84 aa)). The chain crosses the membrane as a helical span at residues 112–132 (FWPGAIMYLLPTVFLLVMFYL). Topologically, residues 133–648 (FMRQLQAGGG…FGTPKPAPST (516 aa)) are cytoplasmic. 205-212 (GPPGTGKT) contacts ATP. Residue His-427 coordinates Zn(2+). The active site involves Glu-428. His-431 and Asp-504 together coordinate Zn(2+). A disordered region spans residues 622–648 (YSDRDRAAKEKRRAASIFGTPKPAPST).

This sequence in the central section; belongs to the AAA ATPase family. In the C-terminal section; belongs to the peptidase M41 family. As to quaternary structure, homohexamer. It depends on Zn(2+) as a cofactor.

It localises to the cell inner membrane. Acts as a processive, ATP-dependent zinc metallopeptidase for both cytoplasmic and membrane proteins. Plays a role in the quality control of integral membrane proteins. This is ATP-dependent zinc metalloprotease FtsH 4 from Sorangium cellulosum (strain So ce56) (Polyangium cellulosum (strain So ce56)).